Consider the following 419-residue polypeptide: MLYYLFDYLEKLQLPGARLFHYVSFRSAVAIVLALLLATVIGNRIIERLRKAQIGETIRDLGLEGQLSKKGTPTMGGLIIIISILIPTLLLARLDNVYILLMIVTTVLLGSLGFLDDYIKVFRKKKEGLHGRYKIIGQVGLGFIIGIVLYMNPAVVIKENSEVLRDGQVERVHFNKQEVKSTKTTIPFVKNNNFDYADILPLEGKTKVLFGWILFVCVAVVVVTFISNCANLTDGLDGLATGSSAIIGVVLAIFAYVSSHIEMASYLNIMFIPGAEELTIFAFAFVGATIGFLWYNAYPAQVFMGDTGSLTLGGIIAVFALIIRKEMLLPILCFVFIIEGLSVMIQVFYFKLTKRRTGEGRRIFKMTPLHHHFQKPGNAGIDAWLQKPMQAIPESKITVRFWLVGIIMAAITIATLKMR.

Transmembrane regions (helical) follow at residues Tyr-22–Gly-42, Thr-72–Ala-92, Ile-99–Ile-119, Ile-135–Val-155, Val-208–Asn-228, Gly-238–Ser-258, Leu-278–Tyr-298, Phe-303–Ile-323, Leu-328–Phe-348, and Lys-396–Leu-416.

Belongs to the glycosyltransferase 4 family. MraY subfamily. Mg(2+) serves as cofactor.

The protein localises to the cell inner membrane. The catalysed reaction is UDP-N-acetyl-alpha-D-muramoyl-L-alanyl-gamma-D-glutamyl-meso-2,6-diaminopimeloyl-D-alanyl-D-alanine + di-trans,octa-cis-undecaprenyl phosphate = di-trans,octa-cis-undecaprenyl diphospho-N-acetyl-alpha-D-muramoyl-L-alanyl-D-glutamyl-meso-2,6-diaminopimeloyl-D-alanyl-D-alanine + UMP. Its pathway is cell wall biogenesis; peptidoglycan biosynthesis. Its function is as follows. Catalyzes the initial step of the lipid cycle reactions in the biosynthesis of the cell wall peptidoglycan: transfers peptidoglycan precursor phospho-MurNAc-pentapeptide from UDP-MurNAc-pentapeptide onto the lipid carrier undecaprenyl phosphate, yielding undecaprenyl-pyrophosphoryl-MurNAc-pentapeptide, known as lipid I. In Porphyromonas gingivalis (strain ATCC BAA-308 / W83), this protein is Phospho-N-acetylmuramoyl-pentapeptide-transferase.